The chain runs to 194 residues: HTH-type transcriptional regulator BetI (194 aa).

Positions 8 to 68 (EIRRAQLIDA…ATMRHVLRDL (61 aa)) constitute an HTH tetR-type domain. A DNA-binding region (H-T-H motif) is located at residues 31 to 50 (TLASVAQRANISTGIVSHYF).

Its pathway is amine and polyamine biosynthesis; betaine biosynthesis via choline pathway [regulation]. In terms of biological role, repressor involved in the biosynthesis of the osmoprotectant glycine betaine. It represses transcription of the choline transporter BetT and the genes of BetAB involved in the synthesis of glycine betaine. The protein is HTH-type transcriptional regulator BetI of Burkholderia ambifaria (strain MC40-6).